A 123-amino-acid polypeptide reads, in one-letter code: Holo-[acyl-carrier-protein] synthase (123 aa).

Mg(2+) is bound by residues Asp-8 and Glu-56.

Belongs to the P-Pant transferase superfamily. AcpS family. Mg(2+) is required as a cofactor.

The protein resides in the cytoplasm. It catalyses the reaction apo-[ACP] + CoA = holo-[ACP] + adenosine 3',5'-bisphosphate + H(+). Functionally, transfers the 4'-phosphopantetheine moiety from coenzyme A to a Ser of acyl-carrier-protein. This Treponema denticola (strain ATCC 35405 / DSM 14222 / CIP 103919 / JCM 8153 / KCTC 15104) protein is Holo-[acyl-carrier-protein] synthase.